Here is a 258-residue protein sequence, read N- to C-terminus: Deoxyribose-phosphate aldolase 2 (258 aa).

The Proton donor/acceptor role is filled by Asp102. The Schiff-base intermediate with acetaldehyde role is filled by Lys165. The Proton donor/acceptor role is filled by Lys199.

The protein belongs to the DeoC/FbaB aldolase family. DeoC type 2 subfamily.

Its subcellular location is the cytoplasm. The enzyme catalyses 2-deoxy-D-ribose 5-phosphate = D-glyceraldehyde 3-phosphate + acetaldehyde. It functions in the pathway carbohydrate degradation; 2-deoxy-D-ribose 1-phosphate degradation; D-glyceraldehyde 3-phosphate and acetaldehyde from 2-deoxy-alpha-D-ribose 1-phosphate: step 2/2. Functionally, catalyzes a reversible aldol reaction between acetaldehyde and D-glyceraldehyde 3-phosphate to generate 2-deoxy-D-ribose 5-phosphate. In Vibrio vulnificus (strain YJ016), this protein is Deoxyribose-phosphate aldolase 2 (deoC2).